Consider the following 201-residue polypeptide: Orotate phosphoribosyltransferase (201 aa).

5-phospho-alpha-D-ribose 1-diphosphate-binding positions include lysine 90 and 113 to 121 (EDIITTGGS). Orotate is bound by residues threonine 117 and arginine 145.

This sequence belongs to the purine/pyrimidine phosphoribosyltransferase family. PyrE subfamily. Homodimer. It depends on Mg(2+) as a cofactor.

The enzyme catalyses orotidine 5'-phosphate + diphosphate = orotate + 5-phospho-alpha-D-ribose 1-diphosphate. It participates in pyrimidine metabolism; UMP biosynthesis via de novo pathway; UMP from orotate: step 1/2. In terms of biological role, catalyzes the transfer of a ribosyl phosphate group from 5-phosphoribose 1-diphosphate to orotate, leading to the formation of orotidine monophosphate (OMP). This is Orotate phosphoribosyltransferase from Sulfurovum sp. (strain NBC37-1).